A 307-amino-acid chain; its full sequence is uncharacterized protein (307 aa).

Positions 1 to 25 (MKFQKRNIQLVLILLLILNNCFINS) are cleaved as a signal peptide. The interval 60–90 (ENNNKNNNNNNNNNNNNNNNNKNSKVKNDDS) is disordered. The segment covering 63–82 (NKNNNNNNNNNNNNNNNNKN) has biased composition (low complexity). 2 N-linked (GlcNAc...) asparagine glycosylation sites follow: Asn124 and Asn173. 2 consecutive transmembrane segments (helical) span residues 244–264 (IIFAITFIIFLFTYLIIYYLA) and 275–295 (IIGVLTVFLWVIITLLFTIVI).

The protein resides in the membrane. This is an uncharacterized protein from Dictyostelium discoideum (Social amoeba).